Reading from the N-terminus, the 267-residue chain is Non-homologous end joining protein Ku (267 aa).

The Ku domain maps to 10-190 (ISFGLVSFPV…TKYTAKELEL (181 aa)).

This sequence belongs to the prokaryotic Ku family. Homodimer. Interacts with LigD.

Its function is as follows. With LigD forms a non-homologous end joining (NHEJ) DNA repair enzyme, which repairs dsDNA breaks with reduced fidelity. Binds linear dsDNA with 5'- and 3'- overhangs but not closed circular dsDNA nor ssDNA. Recruits and stimulates the ligase activity of LigD. This chain is Non-homologous end joining protein Ku, found in Solibacter usitatus (strain Ellin6076).